A 196-amino-acid polypeptide reads, in one-letter code: MVSWWQALTRAAGRYPWPANVLLYAGFFSGGDALQQVLRGGPADWQHTRHVATVAVAFHANLNYVWLNLLERALPGRAPRTILAKVLCDQALGGPVYVSTFYAGMSILQGKDDIFLDMRQKFWNTYKSGLMYWPFVQLINFSLIPIRWRTAYTGLCGFLWATFLCFSQQEGDGTFKSAFTFRRIKVTNEVEKPSEK.

Residues 1-16 (MVSWWQALTRAAGRYP) lie on the Cytoplasmic side of the membrane. The targeting to peroxisomes stretch occupies residues 16 to 55 (PWPANVLLYAGFFSGGDALQQVLRGGPADWQHTRHVATVA). A helical membrane pass occupies residues 17-34 (WPANVLLYAGFFSGGDAL). At 35–50 (QQVLRGGPADWQHTRH) the chain is on the lumenal side. Residues 51 to 67 (VATVAVAFHANLNYVWL) form a helical membrane-spanning segment. At 68–90 (NLLERALPGRAPRTILAKVLCDQ) the chain is on the cytoplasmic side. The chain crosses the membrane as a helical span at residues 91–108 (ALGGPVYVSTFYAGMSIL). The Lumenal segment spans residues 109–150 (QGKDDIFLDMRQKFWNTYKSGLMYWPFVQLINFSLIPIRWRT). A helical membrane pass occupies residues 151–167 (AYTGLCGFLWATFLCFS). Residues 168–196 (QQEGDGTFKSAFTFRRIKVTNEVEKPSEK) lie on the Cytoplasmic side of the membrane.

The protein belongs to the peroxisomal membrane protein PXMP2/4 family.

It localises to the peroxisome membrane. Its function is as follows. Participates in reactive oxygen species metabolism by up- or down-regulation of the genes of antioxidant enzymes. Protective against the mitochondrial apoptotic cascade. The sequence is that of Mpv17-like protein (MPV17L) from Bos taurus (Bovine).